The chain runs to 718 residues: DNA ligase (718 aa).

Residues 44 to 48, 93 to 94, and Glu-127 each bind NAD(+); these read DADYD and SL. Lys-129 functions as the N6-AMP-lysine intermediate in the catalytic mechanism. NAD(+) contacts are provided by Arg-150, Glu-186, Lys-302, and Lys-326. Residues Cys-432, Cys-435, Cys-456, and Cys-462 each coordinate Zn(2+). A BRCT domain is found at 640–718; that stretch reads TAGSPVAGKT…EDEWLALISG (79 aa).

This sequence belongs to the NAD-dependent DNA ligase family. LigA subfamily. The cofactor is Mg(2+). Mn(2+) is required as a cofactor.

The catalysed reaction is NAD(+) + (deoxyribonucleotide)n-3'-hydroxyl + 5'-phospho-(deoxyribonucleotide)m = (deoxyribonucleotide)n+m + AMP + beta-nicotinamide D-nucleotide.. In terms of biological role, DNA ligase that catalyzes the formation of phosphodiester linkages between 5'-phosphoryl and 3'-hydroxyl groups in double-stranded DNA using NAD as a coenzyme and as the energy source for the reaction. It is essential for DNA replication and repair of damaged DNA. The sequence is that of DNA ligase from Rhizobium etli (strain CIAT 652).